The sequence spans 323 residues: Acetyl-coenzyme A carboxylase carboxyl transferase subunit alpha (323 aa).

A CoA carboxyltransferase C-terminal domain is found at glutamate 35–glutamate 296.

It belongs to the AccA family. As to quaternary structure, acetyl-CoA carboxylase is a heterohexamer composed of biotin carboxyl carrier protein (AccB), biotin carboxylase (AccC) and two subunits each of ACCase subunit alpha (AccA) and ACCase subunit beta (AccD).

The protein localises to the cytoplasm. The enzyme catalyses N(6)-carboxybiotinyl-L-lysyl-[protein] + acetyl-CoA = N(6)-biotinyl-L-lysyl-[protein] + malonyl-CoA. It participates in lipid metabolism; malonyl-CoA biosynthesis; malonyl-CoA from acetyl-CoA: step 1/1. Its function is as follows. Component of the acetyl coenzyme A carboxylase (ACC) complex. First, biotin carboxylase catalyzes the carboxylation of biotin on its carrier protein (BCCP) and then the CO(2) group is transferred by the carboxyltransferase to acetyl-CoA to form malonyl-CoA. The chain is Acetyl-coenzyme A carboxylase carboxyl transferase subunit alpha from Aquifex aeolicus (strain VF5).